The chain runs to 257 residues: Pyridoxine 5'-phosphate synthase (257 aa).

A 3-amino-2-oxopropyl phosphate-binding site is contributed by asparagine 16. 1-deoxy-D-xylulose 5-phosphate is bound at residue 18 to 19 (DH). Arginine 27 is a 3-amino-2-oxopropyl phosphate binding site. The active-site Proton acceptor is histidine 52. 1-deoxy-D-xylulose 5-phosphate contacts are provided by arginine 54 and histidine 59. Residue glutamate 79 is the Proton acceptor of the active site. Threonine 109 contacts 1-deoxy-D-xylulose 5-phosphate. Histidine 200 functions as the Proton donor in the catalytic mechanism. Residues glycine 201 and 222-223 (GH) each bind 3-amino-2-oxopropyl phosphate.

Belongs to the PNP synthase family. In terms of assembly, homooctamer; tetramer of dimers.

The protein resides in the cytoplasm. It carries out the reaction 3-amino-2-oxopropyl phosphate + 1-deoxy-D-xylulose 5-phosphate = pyridoxine 5'-phosphate + phosphate + 2 H2O + H(+). It participates in cofactor biosynthesis; pyridoxine 5'-phosphate biosynthesis; pyridoxine 5'-phosphate from D-erythrose 4-phosphate: step 5/5. Its function is as follows. Catalyzes the complicated ring closure reaction between the two acyclic compounds 1-deoxy-D-xylulose-5-phosphate (DXP) and 3-amino-2-oxopropyl phosphate (1-amino-acetone-3-phosphate or AAP) to form pyridoxine 5'-phosphate (PNP) and inorganic phosphate. In Burkholderia pseudomallei (strain K96243), this protein is Pyridoxine 5'-phosphate synthase.